Here is a 279-residue protein sequence, read N- to C-terminus: Genome polyprotein (279 aa).

The protein belongs to the potyviridae genome polyprotein family. Post-translationally, genome polyprotein of potyviruses undergoes post-translational proteolytic processing by the main proteinase NIa-pro resulting in the production of at least ten individual proteins. The P1 proteinase and the HC-pro cleave only their respective C-termini autocatalytically. 6K1 is essential for proper proteolytic separation of P3 from CI.

The protein localises to the virion. The catalysed reaction is RNA(n) + a ribonucleoside 5'-triphosphate = RNA(n+1) + diphosphate. Its function is as follows. An RNA-dependent RNA polymerase that plays an essential role in the virus replication. Involved in aphid transmission, cell-to-cell and systemis movement, encapsidation of the viral RNA and in the regulation of viral RNA amplification. This is Genome polyprotein from Solanum betaceum (Tamarillo).